An 87-amino-acid chain; its full sequence is uncharacterized protein (87 aa).

It belongs to the YlmC/YmxH family.

This is an uncharacterized protein from Clostridium acetobutylicum (strain ATCC 824 / DSM 792 / JCM 1419 / IAM 19013 / LMG 5710 / NBRC 13948 / NRRL B-527 / VKM B-1787 / 2291 / W).